We begin with the raw amino-acid sequence, 713 residues long: MDAPIKFFATAPKGVEPLLADELRALGALEVSETRAGASFQGSLETAYRICLWSRLASRVLMPIAEFSAEDPDQLYAAVGAVPWEEHMTAAGTLAVDAQLRRSKINHSRFAALRVKDAVVDRFRERFDQRPSIDLERPDIRLNLHIDRDQATLSLDLSGDSLHRRGYRAEGVLAPLKENLAAAILLRAGWPDVGARGGALVDPMCGSGTLVIEAALITADCAPGLTRPYWGFAGWLQHRAEVWDTLLEEARQRREAGLQQLPCMIGYDRDRKAIRAARENARLAGLDAHLRFERCELEDLQAVPDAGESGGLLVTNPPYGERLGEVDELRSLYASLGEKLRTHFSGWQAAVFTGNPELAKHIGIRAHKLYKLYNGALECRLLNFDIAEQRFFGADAPQAPLSEGAIMFANRLRKNIKQLRRWLKKEDVTCYRLYDADMPEYAVAVDIYEDRVHVQEYQAPASVDSRQAERRLREVMRVLPEVLQVEPEAITLKVRRKQKGSSQYQKLDRSGERFEVREGNCWFLVNLTDYLDTGLFLDHRPTRFMLQAMAEGKSFLNLFAYTGTATVHAVKGGAATTVTVDMSRTYLDWAQANLRLNQLSGPQHRFVCADVLQYLEREQAHYDLIFLDPPTFSTSKSMETTLDIQRDHVDIIRLAANLLTPGGVLIFSNNFRKFRMDFESLPELEIENITAATIPHDFARNPKIHNCWRITRR.

The region spanning 46 to 157 (TAYRICLWSR…RDQATLSLDL (112 aa)) is the THUMP domain.

The protein belongs to the methyltransferase superfamily. RlmKL family.

The protein localises to the cytoplasm. The catalysed reaction is guanosine(2445) in 23S rRNA + S-adenosyl-L-methionine = N(2)-methylguanosine(2445) in 23S rRNA + S-adenosyl-L-homocysteine + H(+). It catalyses the reaction guanosine(2069) in 23S rRNA + S-adenosyl-L-methionine = N(2)-methylguanosine(2069) in 23S rRNA + S-adenosyl-L-homocysteine + H(+). Specifically methylates the guanine in position 2445 (m2G2445) and the guanine in position 2069 (m7G2069) of 23S rRNA. The protein is Ribosomal RNA large subunit methyltransferase K/L of Syntrophotalea carbinolica (strain DSM 2380 / NBRC 103641 / GraBd1) (Pelobacter carbinolicus).